The sequence spans 1499 residues: MKPLAIPANHGVMGQQEKHSLPADFTKLHLTDSLHPQVTHVSSSHSGCSITSDSGSSSLSDIYQATESEAGDMDLSGLPETAVDSEDDDDEEDIERASDPLMSRDIVRDCLEKDPIDRTDDDIEQLLEFMHQLPAFANMTMSVRRELCAVMVFAVVERAGTIVLNDGEELDSWSVILNGSVEVTYPDGKAEILCMGNSFGVSPTMDKEYMKGVMRTKVDDCQFVCIAQQDYCRILNQVEKNMQKVEEEGEIVMVKEHRELDRTGTRKGHIVIKGTSERLTMHLVEEHSVVDPTFIEDFLLTYRTFLSSPMEVGKKLLEWFNDPSLRDKVTRVVLLWVNNHFNDFEGDPAMTRFLEEFENNLEREKMGGHLRLLNIACAAKAKRRLMTLTKPSREAPLPFILLGGSEKGFGIFVDSVDSGSKATEAGLKRGDQILEVNGQNFENIQLSKAMEILRNNTHLSITVKTNLFVFKELLTRLSEEKRNGAPHLPKIGDIKKASRYSIPDLAVDVEQVIGLEKVNKKSKANTVGGRNKLKKILDKTRISILPQKPYNDIGIGQSQDDSIVGLRQTKHIPTALPVSGTLSSSNPDLLQSHHRILDFSATPDLPDQVLRVFKADQQSRYIMISKDTTAKEVVIQAIREFAVTATPDQYSLCEVSVTPEGVIKQRRLPDQLSKLADRIQLSGRYYLKNNMETETLCSDEDAQELLRESQISLLQLSTVEVATQLSMRNFELFRNIEPTEYIDDLFKLRSKTSCANLKRFEEVINQETFWVASEILRETNQLKRMKIIKHFIKIALHCRECKNFNSMFAIISGLNLAPVARLRTTWEKLPNKYEKLFQDLQDLFDPSRNMAKYRNVLNSQNLQPPIIPLFPVIKKDLTFLHEGNDSKVDGLVNFEKLRMIAKEIRHVGRMASVNMDPALMFRTRKKKWRSLGSLSQGSTNATVLDVAQTGGHKKRVRRSSFLNAKKLYEDAQMARKVKQYLSNLELEMDEESLQTLSLQCEPATNTLPKNPGDKKPVKSETSPVAPRAGSQQKAQSLPQPQQQPPPAHKINQGLQVPAVSLYPSRKKVPVKDLPPFGINSPQALKKILSLSEEGSLERHKKQAEDTISNASSQLSSPPTSPQSSPRKGYTLAPSGTVDNFSDSGHSEISSRSSIVSNSSFDSVPVSLHDERRQRHSVSIVETNLGMGRMERRTMIEPDQYSLGSYAPMSEGRGLYATATVISSPSTEELSQDQGDRASLDAADSGRGSWTSCSSGSHDNIQTIQHQRSWETLPFGHTHFDYSGDPAGLWASSSHMDQIMFSDHSTKYNRQNQSRESLEQAQSRASWASSTGYWGEDSEGDTGTIKRRGGKDVSIEAESSSLTSVTTEETKPVPMPAHIAVASSTTKGLIARKEGRYREPPPTPPGYIGIPITDFPEGHSHPARKPPDYNVALQRSRMVARSSDTAGPSSVQQPHGHPTSSRPVNKPQWHKPNESDPRLAPYQSQGFSTEEDEDEQVSAV.

Disordered stretches follow at residues 40 to 59 and 68 to 101; these read HVSSSHSGCSITSDSGSSSL and SEAGDMDLSGLPETAVDSEDDDDEEDIERASDPL. A compositionally biased stretch (acidic residues) spans 83–94; sequence VDSEDDDDEEDI. Position 135–254 (135–254) interacts with a nucleoside 3',5'-cyclic phosphate; that stretch reads AFANMTMSVR…VEEEGEIVMV (120 aa). Residues 267-380 form the N-terminal Ras-GEF domain; that stretch reads KGHIVIKGTS…RLLNIACAAK (114 aa). A PDZ domain is found at 385–470; sequence LMTLTKPSRE…ITVKTNLFVF (86 aa). Position 501 is a phosphoserine (S501). The 87-residue stretch at 606-692 folds into the Ras-associating domain; it reads PDQVLRVFKA…GRYYLKNNME (87 aa). T644 carries the post-translational modification Phosphothreonine; by PLK2. The Ras-GEF domain maps to 717–944; sequence STVEVATQLS…SQGSTNATVL (228 aa). Residue S806 is modified to Phosphoserine; by PLK2. S930 is subject to Phosphoserine. The residue at position 933 (S933) is a Phosphoserine; by PLK2. The segment at 1002-1050 is disordered; that stretch reads PATNTLPKNPGDKKPVKSETSPVAPRAGSQQKAQSLPQPQQQPPPAHKI. S1022 is modified (phosphoserine). The segment covering 1031–1040 has biased composition (low complexity); sequence QQKAQSLPQP. Residues S1080, S1089, S1095, S1116, S1120, and S1159 each carry the phosphoserine modification. Residues 1095–1160 are disordered; the sequence is SLERHKKQAE…RSSIVSNSSF (66 aa). Composition is skewed to low complexity over residues 1111 to 1125 and 1141 to 1160; these read SSQLSSPPTSPQSSP and SDSGHSEISSRSSIVSNSSF. S1176 bears the Phosphoserine; by PLK2 mark. Disordered stretches follow at residues 1224–1256 and 1305–1499; these read PSTEELSQDQGDRASLDAADSGRGSWTSCSSGS and TKYN…VSAV. Polar residues-rich tracts occupy residues 1247–1256 and 1307–1331; these read GSWTSCSSGS and YNRQNQSRESLEQAQSRASWASSTG. A compositionally biased stretch (low complexity) spans 1355–1366; it reads EAESSSLTSVTT. Positions 1441-1462 are enriched in polar residues; sequence SSDTAGPSSVQQPHGHPTSSRP. Residues 1488 to 1499 show a composition bias toward acidic residues; that stretch reads TEEDEDEQVSAV.

The protein belongs to the RAPGEF2 family. As to quaternary structure, interacts with CDH1, CTNNB1 and TJP1. Interacts (via C-terminal domain) with MAGI2 (via PDZ and WW domains); the interaction occurs before or after NGF stimulation. Interacts with KIDINS220 and NTRK1; the interactions occur after NGF stimulation. Found in a complex, at least composed of KIDINS220, MAGI2, NTRK1 and RAPGEF2; the complex is mainly formed at late endosomes in a neuronal growth factor (NGF)-dependent manner. Interacts (via C-terminal domain) with NEDD4 (via WW domains); this interaction leads to ubiquitination and degradation via the proteasome pathway in a cAMP-independent manner. Interacts with MAGI1 isoform 3 (via PDZ domain). Interacts with ADRB1 (via C-terminal PDZ motif); the interaction is direct. Interacts (via Ras-associating domain) with RAP1A (via GTP-bound active form). Interacts weakly with HRAS (via GDP- and GTP-bound forms). Interacts (via C-terminal domain) with MAGI2 (via PDZ and WW domains). In terms of processing, ubiquitinated by NEDD4, leading to proteasomal degradation. Phosphorylation by PLK2 promotes its activity. As to expression, expressed in primary neuronal and endocrine cells (at protein level). Highest expression levels in brain. Lower expression levels in heart, kidney, lung, placenta and blood leukocytes.

Its subcellular location is the cytoplasm. The protein resides in the perinuclear region. The protein localises to the cell membrane. It localises to the late endosome. It is found in the cell junction. Functionally, functions as a guanine nucleotide exchange factor (GEF), which activates Rap and Ras family of small GTPases by exchanging bound GDP for free GTP in a cAMP-dependent manner. Serves as a link between cell surface receptors and Rap/Ras GTPases in intracellular signaling cascades. Also acts as an effector for Rap1 by direct association with Rap1-GTP thereby leading to the amplification of Rap1-mediated signaling. Shows weak activity on HRAS. It is controversial whether RAPGEF2 binds cAMP and cGMP or not. Its binding to ligand-activated beta-1 adrenergic receptor ADRB1 leads to the Ras activation through the G(s)-alpha signaling pathway. Involved in the cAMP-induced Ras and Erk1/2 signaling pathway that leads to sustained inhibition of long term melanogenesis by reducing dendrite extension and melanin synthesis. Also provides inhibitory signals for cell proliferation of melanoma cells and promotes their apoptosis in a cAMP-independent nanner. Regulates cAMP-induced neuritogenesis by mediating the Rap1/B-Raf/ERK signaling through a pathway that is independent on both PKA and RAPGEF3/RAPGEF4. Involved in neuron migration and in the formation of the major forebrain fiber connections forming the corpus callosum, the anterior commissure and the hippocampal commissure during brain development. Involved in neuronal growth factor (NGF)-induced sustained activation of Rap1 at late endosomes and in brain-derived neurotrophic factor (BDNF)-induced axon outgrowth of hippocampal neurons. Plays a role in the regulation of embryonic blood vessel formation and in the establishment of basal junction integrity and endothelial barrier function. May be involved in the regulation of the vascular endothelial growth factor receptor KDR and cadherin CDH5 expression at allantois endothelial cell-cell junctions. The protein is Rap guanine nucleotide exchange factor 2 (RAPGEF2) of Homo sapiens (Human).